Here is a 230-residue protein sequence, read N- to C-terminus: 6-carboxyhexanoate--CoA ligase (230 aa).

This sequence belongs to the BioW family. In terms of assembly, homodimer. The cofactor is Mg(2+).

The enzyme catalyses heptanedioate + ATP + CoA = 6-carboxyhexanoyl-CoA + AMP + diphosphate. Its pathway is metabolic intermediate metabolism; pimeloyl-CoA biosynthesis; pimeloyl-CoA from pimelate: step 1/1. In terms of biological role, catalyzes the transformation of pimelate into pimeloyl-CoA with concomitant hydrolysis of ATP to AMP. The chain is 6-carboxyhexanoate--CoA ligase from Staphylococcus aureus (strain MSSA476).